We begin with the raw amino-acid sequence, 3159 residues long: MHHGTGPQNVQHQLQRSRACPGSEGEEQPAHPNPPPSPAAPFAPSASPSAPQSPSYQIQQLMNRSPATGQNVNITLQSVGPVVGGNQQITLAPLPLPSPTSPGFQFSAQPRRFEHGSPSYIQVTSPLSQQVQTQSPTQPSPGPGQALQNVRAGAPGPGLGLCSSSPTGGFVDASVLVRQISLSPSSGGHFVFQDGSGLTQIAQGAQVQLQHPGTPITVRERRPSQPHTQSGGTIHHLGPQSPAAAGGAGLQPLASPSHITTANLPPQISSIIQGQLVQQQQVLQGPPLPRPLGFERTPGVLLPGAGGAAGFGMTSPPPPTSPSRTAVPPGLSSLPLTSVGNTGMKKVPKKLEEIPPASPEMAQMRKQCLDYHYQEMQALKEVFKEYLIELFFLQHFQGNMMDFLAFKKKHYAPLQAYLRQNDLDIEEEEEEEEEEEEKSEVINDEVKVVTGKDGQTGTPVAIATQLPPKVSAAFSSQQQPFQQALAGSLVAGAGSTVETDLFKRQQAMPSTGMAEQSKRPRLEVGHQGVVFQHPGADAGVPLQQLMPTAQGGMPPTPQAAQLAGQRQSQQQYDPSTGPPVQNAASLHTPLPQLPGRLPPAGVPTAALSSALQFAQQPQVVEAQTQLQIPVKTQQPNVPIPAPPSSQLPIPPSQPAQLALHVPTPGKVQVQASQLSSLPQMVASTRLPVDPAPPCPRPLPTSSTSSLAPVSGSGPGPSPARSSPVNRPSSATNKALSPVTSRTPGVVASAPTKPQSPAQNATSSQDSSQDTLTEQITLENQVHQRIAELRKAGLWSQRRLPKLQEAPRPKSHWDYLLEEMQWMATDFAQERRWKVAAAKKLVRTVVRHHEEKQLREERGKKEEQSRLRRIAASTAREIECFWSNIEQVVEIKLRVELEEKRKKALNLQKVSRRGKELRPKGFDALQESSLDSGMSGRKRKASISLTDDEVDDEEETIEEEEANEGVVDHQTELSNLAKEAELPLLDLMKLYEGAFLPSSQWPRPKPDGEDTSGEEDADDCPGDRESRKDLVLIDSLFIMDQFKAAERMNIGKPNAKDIADVTAVAEAILPKGSARVTTSVKFNAPSLLYGALRDYQKIGLDWLAKLYRKNLNGILADEAGLGKTVQIIAFFAHLACNEGNWGPHLVVVRSCNILKWELELKRWCPGLKILSYIGSHRELKAKRQEWAEPNSFHVCITSYTQFFRGLTAFTRVRWKCLVIDEMQRVKGMTERHWEAVFTLQSQQRLLLIDSPLHNTFLELWTMVHFLVPGISRPYLSSPLRAPSEESQDYYHKVVIRLHRVTQPFILRRTKRDVEKQLTKKYEHVLKCRLSNRQKALYEDVILQPGTQEALKSGHFVNVLSILVRLQRICNHPGLVEPRHPGSSYVAGPLEYPSASLILKALERDFWKEADLSMFDLIGLENKITRHEAELLSKKKIPRKLMEEISTSAAPAARPAAAKLKASRLFQPVQYGQKPEGRTVAFPSTHPPRTAAPTTASAAPQGPLRGRPPIATFSANPEAKAAAAPFQTSQASASAPRHQPASASSTAASPAHPAKLRAQTTAQASTPGQPPPQPQAPSHAAGQSALPQRLVLPSQAQARLPSGEVVKIAQLASITGPQSRVAQPETPVTLQFQGSKFTLSHSQLRQLTAGQPLQLQGSVLQIVSAPGQPYLRAPGPVVMQTVSQAGAVHGALGSKPPAGGPSPAPLTPQVGVPGRVAVNALAVGEPGTASKPASPIGGPTQEEKTRLLKERLDQIYLVNERRCSQAPVYGRDLLRICALPSHGRVQWRGSLDGRRGKEAGPAHSYTSSSESPSELMLTLCRCGESLQDVIDRVAFVIPPVVAAPPSLRVPRPPPLYSHRMRILRQGLREHAAPYFQQLRQTTAPRLLQFPELRLVQFDSGKLEALAILLQKLKSEGRRVLILSQMILMLDILEMFLNFHYLTYVRIDENASSEQRQELMRSFNRDRRIFCAILSTHSRTTGINLVEADTVVFYDNDLNPVMDAKAQEWCDRIGRCKDIHIYRLVSGNSIEEKLLKNGTKDLIREVAAQGNDYSMAFLTQRTIQELFEVYSPMDDAGFPVKAEEFVVLSQEPSVTETIAPKIARPFIEALKSIEYLEEDAQKSAQEGVLGPHTDALSSDSENMPCDEEPSQLEELADFMEQLTPIEKYALNYLELFHTSIEQEKERNSEDAVMTAVRAWEFWNLKTLQEREARLRLEQEEAELLTYTREDAYSMEYVYEDVDGQTEVMPLWTPPTPPQDDSDIYLDSVMCLMYEATPIPEAKLPPVYVRKERKRHKTDPSAAGRKKKQRHGEAVVPPRSLFDRATPGLLKIRREGKEQKKNILLKQQVPFAKPLPTFAKPTAEPGQDNPEWLISEDWALLQAVKQLLELPLNLTIVSPAHTPNWDLVSDVVNSCSRIYRSSKQCRNRYENVIIPREEGKSKNNRPLRTSQIYAQDENATHTQLYTSHFDLMKMTAGKRSPPIKPLLGMNPFQKNPKHASVLAESGINYDKPLPPIQVASLRAERIAKEKKALADQQKAQQPAVAQPPPPQPQPPPPPQQPPPPLPQPQAAGSQPPAGPPAVQPQPQPQPQTQPQPVQAPAKAQPAITTGGSAAVLAGTIKTSVTGTSMPTGAVSGNVIVNTIAGVPAATFQSINKRLASPVAPGALTTPGGSAPAQVVHTQPPPRAVGSPATATPDLVSMATTQGVRAVTSVTASAVVTTNLTPVQTPARSLVPQVSQATGVQLPGKTITPAHFQLLRQQQQQQQQQQQQQQQQQQQQQQQQQQQQQTTTTSQVQVPQIQGQAQSPAQIKAVGKLTPEHLIKMQKQKLQMPPQPPPPQAQSAPPQPTAQVQVQTSQPPQQQSPQLTTVTAPRPGALLTGTTVANLQVARLTRVPTSQLQAQGQMQTQAPQPAQVALAKPPVVSVPAAVVSSPGVTTLPMNVAGISVAIGQPQKAAGQTVVAQPVHMQQLLKLKQQAVQQQKAIQPQAAQGPAAVQQKITAQQITTPGAQQKVAYAAQPALKTQFLTTPISQAQKLAGAQQVQTQIQVAKLPQVVQQQTPVASIQQVASASQQASPQTVALTQATAAGQQVQMIPAVTATAQVVQQKLIQQQVVTTASAPLQTPGAPNPAQVPASSDSPSQQPKLQMRVPAVRLKTPTKPPCQ.

Residues 1-16 (MHHGTGPQNVQHQLQR) show a composition bias toward polar residues. Disordered stretches follow at residues 1–65 (MHHG…MNRS), 125–154 (SPLS…RAGA), 212–261 (PGTP…HITT), 282–359 (VLQG…PASP), 545–594 (LMPT…PQLP), 633–658 (QQPN…AQLA), and 684–770 (TRLP…SQDT). The span at 31-41 (HPNPPPSPAAP) shows a compositional bias: pro residues. The span at 42–55 (FAPSASPSAPQSPS) shows a compositional bias: low complexity. S53 is subject to Phosphoserine. The segment covering 56-65 (YQIQQLMNRS) has biased composition (polar residues). 2 stretches are compositionally biased toward low complexity: residues 125-137 (SPLS…QSPT) and 237-256 (LGPQ…LASP). S135 is subject to Phosphoserine. 2 positions are modified to phosphoserine: S315 and S321. Residues 558-571 (QAAQLAGQRQSQQQ) are compositionally biased toward low complexity. Positions 572-585 (YDPSTGPPVQNAAS) are enriched in polar residues. Composition is skewed to pro residues over residues 637 to 653 (VPIP…PPSQ) and 689 to 698 (DPAPPCPRPL). Over residues 699-711 (PTSSTSSLAPVSG) the composition is skewed to low complexity. Polar residues-rich tracts occupy residues 725 to 742 (NRPS…TSRT) and 751 to 760 (TKPQSPAQNA). Phosphoserine occurs at positions 736 and 755. A compositionally biased stretch (low complexity) spans 761–770 (TSSQDSSQDT). The 73-residue stretch at 799–871 (LPKLQEAPRP…EQSRLRRIAA (73 aa)) folds into the HSA domain. Disordered stretches follow at residues 915–967 (ELRP…GVVD) and 997–1024 (SSQW…GDRE). Phosphoserine occurs at positions 928 and 941. T945 is subject to Phosphothreonine. Acidic residues-rich tracts occupy residues 945 to 962 (TDDE…EEAN) and 1008 to 1019 (EDTSGEEDADDC). Residues 951–1365 (DEEETIEEEE…NVLSILVRLQ (415 aa)) are interactions with RUVBL1 and RUVBL2. S1011 is subject to Phosphoserine. A Helicase ATP-binding domain is found at 1103–1268 (AKLYRKNLNG…WTMVHFLVPG (166 aa)). Position 1116 to 1123 (1116 to 1123 (DEAGLGKT)) interacts with ATP. The short motif at 1219–1222 (DEMQ) is the DEAH box-like element. The disordered stretch occupies residues 1467 to 1582 (VQYGQKPEGR…QAPSHAAGQS (116 aa)). K1472 is modified (N6-acetyllysine). Composition is skewed to low complexity over residues 1481-1498 (PSTH…SAAP) and 1538-1565 (PASA…ASTP). 3 positions are modified to phosphoserine: S1547, S1728, and S1732. A disordered region spans residues 1787–1807 (GSLDGRRGKEAGPAHSYTSSS). Basic and acidic residues predominate over residues 1789 to 1798 (LDGRRGKEAG). The Helicase C-terminal domain maps to 1899-2056 (KLEALAILLQ…GNDYSMAFLT (158 aa)). 2 disordered regions span residues 2119–2144 (KSAQ…PCDE) and 2287–2311 (KERK…GEAV). An N6-acetyllysine mark is found at K2349 and K2356. The 70-residue stretch at 2360-2429 (EPGQDNPEWL…QCRNRYENVI (70 aa)) folds into the Myb-like domain. Disordered stretches follow at residues 2524–2602 (KEKK…AQPA) and 2665–2688 (TPGG…GSPA). Positions 2524–2789 (KEKKALADQQ…QQQQQTTTTS (266 aa)) are interaction with ZNF42. A compositionally biased stretch (low complexity) spans 2530-2540 (ADQQKAQQPAV). Pro residues-rich tracts occupy residues 2541–2563 (AQPP…PLPQ) and 2572–2589 (PAGP…PQTQ). The segment covering 2590-2602 (PQPVQAPAKAQPA) has biased composition (low complexity). S2686 bears the Phosphoserine mark. Residue T2813 is modified to Phosphothreonine. 2 disordered regions span residues 2821-2869 (QKQK…TAPR) and 3115-3159 (APLQ…PPCQ). A compositionally biased stretch (pro residues) spans 2828-2843 (PPQPPPPQAQSAPPQP). The span at 2844–2866 (TAQVQVQTSQPPQQQSPQLTTVT) shows a compositional bias: low complexity. Residues 3129–3140 (PASSDSPSQQPK) show a composition bias toward polar residues.

This sequence belongs to the SNF2/RAD54 helicase family. SWR1 subfamily. As to quaternary structure, component of the NuA4 histone acetyltransferase complex which contains the catalytic subunit KAT5/TIP60 and the subunits EP400, TRRAP/PAF400, BRD8/SMAP, EPC1, DMAP1/DNMAP1, RUVBL1/TIP49, RUVBL2, ING3, actin, ACTL6A/BAF53A, MORF4L1/MRG15, MORF4L2/MRGX, MRGBP, YEATS4/GAS41, VPS72/YL1 and MEAF6. May also participate in the formation of NuA4 related complexes which lack the KAT5/TIP60 catalytic subunit, but which include the SWI/SNF related protein SRCAP. The NuA4 complex interacts with MYC and the adenovirus E1A protein. EP400 interacts with TRRAP, RUVBL1 and RUVBL2. Component of a SWR1-like complex. Interacts with ZNF42. Interacts with PHF5A. Interacts with human cytomegalovirus UL27. Interacts with human adenovirus 5 E1A protein; this interaction stabilizes MYC. As to expression, ubiquitously expressed.

It is found in the nucleus. Functionally, component of the NuA4 histone acetyltransferase complex which is involved in transcriptional activation of select genes principally by acetylation of nucleosomal histones H4 and H2A. This modification may both alter nucleosome - DNA interactions and promote interaction of the modified histones with other proteins which positively regulate transcription. May be required for transcriptional activation of E2F1 and MYC target genes during cellular proliferation. The NuA4 complex ATPase and helicase activities seem to be, at least in part, contributed by the association of RUVBL1 and RUVBL2 with EP400. May regulate ZNF42 transcription activity. Component of a SWR1-like complex that specifically mediates the removal of histone H2A.Z/H2AZ1 from the nucleosome. The chain is E1A-binding protein p400 (EP400) from Homo sapiens (Human).